The chain runs to 220 residues: Cytidylate kinase (220 aa).

10–18 (GPASSGKST) contacts ATP.

The protein belongs to the cytidylate kinase family. Type 1 subfamily.

The protein localises to the cytoplasm. It carries out the reaction CMP + ATP = CDP + ADP. It catalyses the reaction dCMP + ATP = dCDP + ADP. In Lactococcus lactis subsp. cremoris (strain SK11), this protein is Cytidylate kinase.